Reading from the N-terminus, the 387-residue chain is Acyl-[acyl-carrier-protein] 6-desaturase (387 aa).

Residues Met-1–Arg-29 constitute a chloroplast transit peptide. The Fe cation site is built by Glu-131, Glu-169, His-172, Glu-222, Glu-255, and His-258.

The protein belongs to the fatty acid desaturase type 2 family. Requires Fe(2+) as cofactor.

It is found in the plastid. It localises to the chloroplast. The catalysed reaction is hexadecanoyl-[ACP] + 2 reduced [2Fe-2S]-[ferredoxin] + O2 + 2 H(+) = (6Z)-hexadecenoyl-[ACP] + 2 oxidized [2Fe-2S]-[ferredoxin] + 2 H2O. Its pathway is lipid metabolism; fatty acid metabolism. Its activity is regulated as follows. Inhibited by KCN or H(2)O(2). Functionally, delta(6) fatty acid desaturase introducing a cis double bond at carbon 6 of palmitoyl-[acyl-carrier protein](16:0-ACP), producing 16:1(6Z)-ACP. No activity with the coenzyme A ester of the fatty acid. The position of the double bond is determined by its distance from the carboxyl end of the fatty acid. Low activity with several saturated acyl-[acyl-carrier protein]s, including 14:0-ACP and 18:0-ACP. Requires reduced ferredoxin for detectable in vitro activity. In Thunbergia alata (Black-eyed Susan vine), this protein is Acyl-[acyl-carrier-protein] 6-desaturase.